Here is a 534-residue protein sequence, read N- to C-terminus: Multicopper oxidase LPR1 homolog 3 (534 aa).

Cu cation is bound by residues His-84 and His-86. A glycan (N-linked (GlcNAc...) asparagine) is linked at Asn-109. Cu cation contacts are provided by His-133 and His-135. The Plastocyanin-like domain maps to 219-291; it reads PFQAVQRRRY…VDFSLVVNPN (73 aa). 6 N-linked (GlcNAc...) asparagine glycosylation sites follow: Asn-234, Asn-291, Asn-312, Asn-323, Asn-341, and Asn-372. Cu cation-binding residues include His-419, His-422, and His-424. N-linked (GlcNAc...) asparagine glycosylation is present at Asn-450. His-515, Cys-516, His-517, His-521, and Met-526 together coordinate Cu cation.

Belongs to the multicopper oxidase family. The cofactor is Cu cation. Expressed in roots and basal stems.

The protein resides in the endoplasmic reticulum membrane. Multicopper oxidase that may play a role in the maintenance of inorganic phosphate homeostasis. The polypeptide is Multicopper oxidase LPR1 homolog 3 (Oryza sativa subsp. japonica (Rice)).